The sequence spans 181 residues: Inner membrane-spanning protein YciB (181 aa).

The next 5 helical transmembrane spans lie at Leu-10 to Ile-30, Met-50 to Asp-70, Ile-80 to Leu-100, Val-118 to Phe-138, and Phe-148 to Leu-168.

It belongs to the YciB family.

The protein resides in the cell inner membrane. Its function is as follows. Plays a role in cell envelope biogenesis, maintenance of cell envelope integrity and membrane homeostasis. The protein is Inner membrane-spanning protein YciB of Shewanella piezotolerans (strain WP3 / JCM 13877).